The chain runs to 549 residues: MKRVLTALAATLPFAANAADAISGAVERQPTNWQAIVMFLIFVVFTLGITYWASKRVRSRSDYYTAGGNITGFQNGLAIAGDYMSAASFLGISALVFTSGYDGLIYSLGFLVGWPIILFLIAERLRNLGRYTFADVASYRLKQGPIRILSACGSLVVVALYLIAQMVGAGKLIELLFGLNYHIAVVLVGVLMMMYVLFGGMLATTWVQIIKAVLLLFGASFMAFMVMKHVGFSFNNLFTEAMAVHPKGSAIMSPGGLVNDPISALSLGLGLMFGTAGLPHILMRFFTVSDAREARKSVFYATGFMGYFYILTFIIGFGAIMLVGANPEYKDAAGALIGGNNMAAVHLANAVGGNLFLGFISAVAFATILAVVAGLTLAGASAVSHDLYANVFRKGATEREELRVSKITVLVLGVIAIILGVLFENQNIAFMVGLAFAIAASCNFPIILLSMYWSKLTTRGAMMGGWLGLVTAVVLMVLGPTIWVQILGHEKAIFPYEYPALFSISVAFIGIWFFSATDNSAEGNREREQFRAQFIRSQTGYGVEQGRAH.

13 helical membrane passes run 33 to 53 (WQAI…TYWA), 77 to 97 (LAIA…ALVF), 103 to 123 (GLIY…LIAE), 148 to 168 (ILSA…QMVG), 183 to 203 (IAVV…GMLA), 206 to 226 (WVQI…AFMV), 262 to 282 (ISAL…PHIL), 303 to 323 (GFMG…IMLV), 355 to 375 (LFLG…VAGL), 404 to 424 (VSKI…VLFE), 428 to 448 (IAFM…PIIL), 464 to 484 (GGWL…TIWV), and 493 to 513 (IFPY…GIWF).

This sequence belongs to the sodium:solute symporter (SSF) (TC 2.A.21) family.

The protein resides in the cell inner membrane. Its function is as follows. Transports acetate. The protein is Cation/acetate symporter ActP of Citrobacter koseri (strain ATCC BAA-895 / CDC 4225-83 / SGSC4696).